The following is a 200-amino-acid chain: Molybdenum cofactor guanylyltransferase (200 aa).

Residues 15-17 (LAG), lysine 28, aspartate 74, and aspartate 104 contribute to the GTP site. A Mg(2+)-binding site is contributed by aspartate 104.

It belongs to the MobA family. As to quaternary structure, monomer. It depends on Mg(2+) as a cofactor.

It localises to the cytoplasm. It catalyses the reaction Mo-molybdopterin + GTP + H(+) = Mo-molybdopterin guanine dinucleotide + diphosphate. Functionally, transfers a GMP moiety from GTP to Mo-molybdopterin (Mo-MPT) cofactor (Moco or molybdenum cofactor) to form Mo-molybdopterin guanine dinucleotide (Mo-MGD) cofactor. The polypeptide is Molybdenum cofactor guanylyltransferase (Pseudomonas fluorescens (strain Pf0-1)).